Consider the following 475-residue polypeptide: MKKENITYGKVHQVIGPVVDVIFTESSQLPRIYDCLSVKLAGEELFLEAAQLIGDDIVRCIALGPTEGLARNEKVTNYNHPIEVPVGKNVLGRMFNVLGKPIDGKEELPKKPQLPIHRKPPSFDDQSNTLEIFETGIKVIDLLTPYARGGKIGLFGGAGVGKTVLVQELIHNIAKEHSGLSVFAGVGERTREGNDLYYEMIQGGVIDKTALVFGQMNEPPGARMRVALTALTMAEYFRDHDNQDVLLFIDNIFRFTQAGSEVSALLGRMPSAVGYQPTLATEMGQLQERIASTKTGSITSVQAIYVPADDLTDPAPATTFTHLDAKTVLDRNIAALGIFPAINPLESTSRLLDPNIVGINHYKVALGVQNILQRFAELQDIIAILGIDELADEDKIIVERARRIRNFLSQPFFVAEKFSGIAGKYVPLSDTIQSFKEILDGKHDDLPEQAFFFVGTIQEAVEKAKRLKKATVEEK.

G156–T163 lines the ATP pocket.

Belongs to the ATPase alpha/beta chains family. In terms of assembly, F-type ATPases have 2 components, CF(1) - the catalytic core - and CF(0) - the membrane proton channel. CF(1) has five subunits: alpha(3), beta(3), gamma(1), delta(1), epsilon(1). CF(0) has three main subunits: a(1), b(2) and c(9-12). The alpha and beta chains form an alternating ring which encloses part of the gamma chain. CF(1) is attached to CF(0) by a central stalk formed by the gamma and epsilon chains, while a peripheral stalk is formed by the delta and b chains.

The protein resides in the cell membrane. It carries out the reaction ATP + H2O + 4 H(+)(in) = ADP + phosphate + 5 H(+)(out). Its function is as follows. Produces ATP from ADP in the presence of a proton gradient across the membrane. The catalytic sites are hosted primarily by the beta subunits. The polypeptide is ATP synthase subunit beta (Mycoplasma pneumoniae (strain ATCC 29342 / M129 / Subtype 1) (Mycoplasmoides pneumoniae)).